The chain runs to 541 residues: Histone acetyltransferase ESA1 (541 aa).

The span at 1–11 (MAVAEIKKEKG) shows a compositional bias: basic and acidic residues. The segment at 1–31 (MAVAEIKKEKGSSLSPEPSSPIQILSTEPDA) is disordered. Positions 12–30 (SSLSPEPSSPIQILSTEPD) are enriched in polar residues. Residues 47–97 (PGCKVHVSKDGEFRLAEILQEHIKKGRKVFYVHYQDFNKRLDEWIELDRID) enclose the Tudor-knot domain. Positions 111-154 (TKENKSKKKSKSKGQTKLSKNNTTANSTTGTPQPSDGQPIMGDD) are disordered. A compositionally biased stretch (basic residues) spans 115–124 (KSKKKSKSKG). Residues 131-146 (NNTTANSTTGTPQPSD) are compositionally biased toward polar residues. An MYST-type HAT domain is found at 196 to 529 (ARVRNLSTII…LNPKLLHWTP (334 aa)). Residues 229-254 (IYICDFTLSYFGSKKQFERFRSKCSM) form a C2HC MYST-type; degenerate zinc finger. The ESA1-RPD3 motif motif lies at 279–300 (RTWCRNLCLLSKLFLDHKTLYY). K296 is subject to N6-acetyllysine; by autocatalysis. Acetyl-CoA is bound by residues 337 to 341 (ACILT) and 346 to 352 (QKRGFGK). E372 acts as the Proton donor/acceptor in catalysis. S376 provides a ligand contact to acetyl-CoA. Positions 413–438 (YDEAENGKDSSATPTPGPGSNASQSS) are disordered.

It belongs to the MYST (SAS/MOZ) family. In terms of assembly, component of the NuA4 histone acetyltransferase complex. In terms of processing, autoacetylation at Lys-296 is required for proper function.

Its subcellular location is the nucleus. The protein localises to the chromosome. It catalyses the reaction L-lysyl-[histone] + acetyl-CoA = N(6)-acetyl-L-lysyl-[histone] + CoA + H(+). The enzyme catalyses L-lysyl-[protein] + acetyl-CoA = N(6)-acetyl-L-lysyl-[protein] + CoA + H(+). The catalysed reaction is 2-hydroxyisobutanoyl-CoA + L-lysyl-[protein] = N(6)-(2-hydroxyisobutanoyl)-L-lysyl-[protein] + CoA + H(+). It carries out the reaction (2E)-butenoyl-CoA + L-lysyl-[protein] = N(6)-(2E)-butenoyl-L-lysyl-[protein] + CoA + H(+). Its function is as follows. Catalytic component of the NuA4 histone acetyltransferase (HAT) complex which is involved in epigenetic transcriptional activation of selected genes principally by acetylation of nucleosomal histones H4, H3, H2B, H2A and H2A variant H2A.Z. Acetylates histone H4 to form H4K5ac, H4K8ac, H4K12ac and H4K16ac, histone H3 to form H3K14ac, and histone H2A to form H2AK4ac and H2AK7ac. The NuA4 complex is involved in the DNA damage response and is required for chromosome segregation. The NuA4 complex plays a direct role in repair of DNA double-strand breaks (DSBs) through homologous recombination. Recruitment to promoters depends on H3K4me. Also acetylates non-histone proteins. In addition to protein acetyltransferase, can use different acyl-CoA substrates, such as 2-hydroxyisobutanoyl-CoA (2-hydroxyisobutyryl-CoA) or (2E)-butenoyl-CoA (crotonyl-CoA), and is able to mediate protein 2-hydroxyisobutyrylation and crotonylation, respectively. The chain is Histone acetyltransferase ESA1 (ESA1) from Candida albicans (strain SC5314 / ATCC MYA-2876) (Yeast).